Here is an 840-residue protein sequence, read N- to C-terminus: DNA mismatch repair protein MutS (840 aa).

An ATP-binding site is contributed by 601-608 (GPNMSGKS).

This sequence belongs to the DNA mismatch repair MutS family.

Its function is as follows. This protein is involved in the repair of mismatches in DNA. It is possible that it carries out the mismatch recognition step. This protein has a weak ATPase activity. The polypeptide is DNA mismatch repair protein MutS (Lactococcus lactis subsp. cremoris (strain SK11)).